We begin with the raw amino-acid sequence, 180 residues long: MMTYNKKYIDSVEYDLIETRKRMWMMERKKNEELLKKYQQAMSDLEDYKNLYMRQRSEMENYQRYIEKTINNIKANANADLIKTMLPVLDSLDAGILHDEKLKPIRSQLIKILSNYGLKEIESRGKKFDPYLNEVVGIVKGDDDIVVEEVQKGYILNNEVLRTSKVIVSKGGNNEQDNRN.

The protein belongs to the GrpE family. Homodimer.

It is found in the cytoplasm. Participates actively in the response to hyperosmotic and heat shock by preventing the aggregation of stress-denatured proteins, in association with DnaK and GrpE. It is the nucleotide exchange factor for DnaK and may function as a thermosensor. Unfolded proteins bind initially to DnaJ; upon interaction with the DnaJ-bound protein, DnaK hydrolyzes its bound ATP, resulting in the formation of a stable complex. GrpE releases ADP from DnaK; ATP binding to DnaK triggers the release of the substrate protein, thus completing the reaction cycle. Several rounds of ATP-dependent interactions between DnaJ, DnaK and GrpE are required for fully efficient folding. This Picrophilus torridus (strain ATCC 700027 / DSM 9790 / JCM 10055 / NBRC 100828 / KAW 2/3) protein is Protein GrpE.